We begin with the raw amino-acid sequence, 66 residues long: Photosystem II reaction center protein H (66 aa).

A helical transmembrane segment spans residues 27–47 (GAVPIMTVIGLLLLVFLVILL).

The protein belongs to the PsbH family. PSII is composed of 1 copy each of membrane proteins PsbA, PsbB, PsbC, PsbD, PsbE, PsbF, PsbH, PsbI, PsbJ, PsbK, PsbL, PsbM, PsbT, PsbX, PsbY, Psb30/Ycf12, peripheral proteins PsbO, CyanoQ (PsbQ), PsbU, PsbV and a large number of cofactors. It forms dimeric complexes.

The protein localises to the cellular thylakoid membrane. One of the components of the core complex of photosystem II (PSII), required for its stability and/or assembly. PSII is a light-driven water:plastoquinone oxidoreductase that uses light energy to abstract electrons from H(2)O, generating O(2) and a proton gradient subsequently used for ATP formation. It consists of a core antenna complex that captures photons, and an electron transfer chain that converts photonic excitation into a charge separation. The polypeptide is Photosystem II reaction center protein H (Prochlorococcus marinus (strain MIT 9515)).